The sequence spans 453 residues: Putative folate transporter 2 (453 aa).

The next 11 membrane-spanning stretches (helical) occupy residues 41–64, 76–96, 108–126, 132–156, 176–195, 201–220, 241–260, 280–300, 312–330, 346–366, and 416–437; these read IVVY…YYLF, SLIL…ALIT, PYLF…SLAL, IQAT…EALV, IASK…YFLE, YIFM…CLFL, FINT…YMSG, SFMG…IIVY, TLIF…PIIL, VLSG…PLFI, and LSMY…VPLL.

This sequence belongs to the major facilitator superfamily. Folate-biopterin transporter (TC 2.A.71) family.

The protein localises to the plastid. It is found in the apicoplast. Its subcellular location is the membrane. Functionally, putative folate transporter. Required for sporogony of malaria parasites and host switching. In Plasmodium berghei (strain Anka), this protein is Putative folate transporter 2.